We begin with the raw amino-acid sequence, 155 residues long: SsrA-binding protein (155 aa).

Belongs to the SmpB family.

Its subcellular location is the cytoplasm. Functionally, required for rescue of stalled ribosomes mediated by trans-translation. Binds to transfer-messenger RNA (tmRNA), required for stable association of tmRNA with ribosomes. tmRNA and SmpB together mimic tRNA shape, replacing the anticodon stem-loop with SmpB. tmRNA is encoded by the ssrA gene; the 2 termini fold to resemble tRNA(Ala) and it encodes a 'tag peptide', a short internal open reading frame. During trans-translation Ala-aminoacylated tmRNA acts like a tRNA, entering the A-site of stalled ribosomes, displacing the stalled mRNA. The ribosome then switches to translate the ORF on the tmRNA; the nascent peptide is terminated with the 'tag peptide' encoded by the tmRNA and targeted for degradation. The ribosome is freed to recommence translation, which seems to be the essential function of trans-translation. This is SsrA-binding protein from Bacillus cereus (strain ATCC 10987 / NRS 248).